A 308-amino-acid polypeptide reads, in one-letter code: Oxygen-dependent coproporphyrinogen-III oxidase (308 aa).

Ser-92 serves as a coordination point for substrate. Positions 96 and 106 each coordinate a divalent metal cation. His-106 acts as the Proton donor in catalysis. 108 to 110 contributes to the substrate binding site; that stretch reads NVR. 2 residues coordinate a divalent metal cation: His-145 and His-175. The segment at 240-275 is important for dimerization; sequence YVEFNLVWDRGTLFGLQTGGRTESILMSMPPLVRWE. 258-260 serves as a coordination point for substrate; that stretch reads GGR.

It belongs to the aerobic coproporphyrinogen-III oxidase family. Homodimer. Requires a divalent metal cation as cofactor.

It localises to the cytoplasm. It carries out the reaction coproporphyrinogen III + O2 + 2 H(+) = protoporphyrinogen IX + 2 CO2 + 2 H2O. It functions in the pathway porphyrin-containing compound metabolism; protoporphyrin-IX biosynthesis; protoporphyrinogen-IX from coproporphyrinogen-III (O2 route): step 1/1. In terms of biological role, involved in the heme biosynthesis. Catalyzes the aerobic oxidative decarboxylation of propionate groups of rings A and B of coproporphyrinogen-III to yield the vinyl groups in protoporphyrinogen-IX. The protein is Oxygen-dependent coproporphyrinogen-III oxidase of Salmonella paratyphi A (strain ATCC 9150 / SARB42).